The sequence spans 446 residues: Phosphoglucosamine mutase (446 aa).

The active-site Phosphoserine intermediate is Ser-103. Mg(2+)-binding residues include Ser-103, Asp-242, Asp-244, and Asp-246. Ser-103 carries the post-translational modification Phosphoserine.

It belongs to the phosphohexose mutase family. The cofactor is Mg(2+). Activated by phosphorylation.

The enzyme catalyses alpha-D-glucosamine 1-phosphate = D-glucosamine 6-phosphate. Functionally, catalyzes the conversion of glucosamine-6-phosphate to glucosamine-1-phosphate. The sequence is that of Phosphoglucosamine mutase from Vibrio campbellii (strain ATCC BAA-1116).